Reading from the N-terminus, the 60-residue chain is Large ribosomal subunit protein bL32 (60 aa).

Positions 1 to 60 are disordered; that stretch reads MAVQQNKKSPSKRGMHRSHDFLVNPATAIEPNTGETHLRHHISPNGFYRGRKVLKTKADE. The segment covering 49-60 has biased composition (basic residues); sequence RGRKVLKTKADE.

Belongs to the bacterial ribosomal protein bL32 family.

In Bordetella bronchiseptica (strain ATCC BAA-588 / NCTC 13252 / RB50) (Alcaligenes bronchisepticus), this protein is Large ribosomal subunit protein bL32.